Consider the following 170-residue polypeptide: MAADDHFSLFGLPTRFALDPVQLEQAWRAVAARVHPDRYATASAAERRVAMQWAARANEAYRQLRDPMLRARYLCEQAGVDLQTESNTAMDPAFLMQQMEWREMLDDARRDPAAFAALRAELEQARLRMQQTLSELIDERGDYQQAGTKVREWMFVEKLAQELSAAQPMQ.

The 75-residue stretch at 5-79 folds into the J domain; the sequence is DHFSLFGLPT…RARYLCEQAG (75 aa).

The protein belongs to the HscB family. As to quaternary structure, interacts with HscA and stimulates its ATPase activity.

Its function is as follows. Co-chaperone involved in the maturation of iron-sulfur cluster-containing proteins. Seems to help targeting proteins to be folded toward HscA. In Bordetella bronchiseptica (strain ATCC BAA-588 / NCTC 13252 / RB50) (Alcaligenes bronchisepticus), this protein is Co-chaperone protein HscB homolog.